The chain runs to 235 residues: Large ribosomal subunit protein uL1 (235 aa).

This sequence belongs to the universal ribosomal protein uL1 family. Part of the 50S ribosomal subunit.

In terms of biological role, binds directly to 23S rRNA. The L1 stalk is quite mobile in the ribosome, and is involved in E site tRNA release. Protein L1 is also a translational repressor protein, it controls the translation of the L11 operon by binding to its mRNA. The chain is Large ribosomal subunit protein uL1 from Prochlorococcus marinus (strain MIT 9215).